The primary structure comprises 1034 residues: Protein argonaute 2 (1034 aa).

Residues 1-201 (MEHERGGGGR…PMRRPDGGGS (201 aa)) are disordered. The span at 18 to 125 (GGRGGGGGDG…ESGGGGGRGG (108 aa)) shows a compositional bias: gly residues. A compositionally biased stretch (low complexity) spans 172–187 (VVRVQPPAPPVAVSRS). The PAZ domain maps to 391-504 (PVLDLVQKSV…VPIELCDLLE (114 aa)). Residues 688–989 (LLFCPMSDQH…AAYRGRLYYE (302 aa)) enclose the Piwi domain.

Belongs to the argonaute family. Ago subfamily.

In terms of biological role, probably involved in the RNA silencing pathway. May bind to short RNAs such as microRNAs (miRNAs) or short interfering RNAs (siRNAs), and represses the translation of mRNAs which are complementary to them. The protein is Protein argonaute 2 (AGO2) of Oryza sativa subsp. japonica (Rice).